We begin with the raw amino-acid sequence, 476 residues long: Angiotensinogen (476 aa).

The first 24 residues, 1–24 (MAPAGVSLRATILCLVAWAGLAAG), serve as a signal peptide directing secretion. 4 N-linked (GlcNAc...) asparagine glycosylation sites follow: asparagine 38, asparagine 161, asparagine 295, and asparagine 319. Cysteine 42 and cysteine 162 are disulfide-bonded.

This sequence belongs to the serpin family. In terms of processing, in response to low blood pressure, the enzyme renin/REN cleaves angiotensinogen to produce angiotensin-1. Angiotensin-1 is a substrate of ACE (angiotensin converting enzyme) that removes a dipeptide to yield the physiologically active peptide angiotensin-2. Angiotensin-1 and angiotensin-2 can be further processed to generate angiotensin-3, angiotensin-4. Angiotensin 1-9 is cleaved from angiotensin-1 by ACE2 and can be further processed by ACE to produce angiotensin 1-7, angiotensin 1-5 and angiotensin 1-4. Angiotensin 1-7 has also been proposed to be cleaved from angiotensin-2 by ACE2 or from angiotensin-1 by MME (neprilysin). Post-translationally, the disulfide bond is labile. Angiotensinogen is present in the circulation in a near 40:60 ratio with the oxidized disulfide-bonded form, which preferentially interacts with receptor-bound renin.

The protein localises to the secreted. Essential component of the renin-angiotensin system (RAS), a potent regulator of blood pressure, body fluid and electrolyte homeostasis. In terms of biological role, acts directly on vascular smooth muscle as a potent vasoconstrictor, affects cardiac contractility and heart rate through its action on the sympathetic nervous system, and alters renal sodium and water absorption through its ability to stimulate the zona glomerulosa cells of the adrenal cortex to synthesize and secrete aldosterone. Acts by binding to angiotensin receptors AGTR1 and AGTR2. Also binds the DEAR/FBXW7-AS1 receptor. Its function is as follows. Stimulates aldosterone release. Functionally, is a ligand for the G-protein coupled receptor MAS1. Has vasodilator and antidiuretic effects. Has an antithrombotic effect that involves MAS1-mediated release of nitric oxide from platelets. The polypeptide is Angiotensinogen (AGT) (Pan troglodytes (Chimpanzee)).